The primary structure comprises 246 residues: tRNA (guanine-N(1)-)-methyltransferase (246 aa).

Residues glycine 113 and isoleucine 133–leucine 138 each bind S-adenosyl-L-methionine.

Belongs to the RNA methyltransferase TrmD family. In terms of assembly, homodimer.

The protein localises to the cytoplasm. It catalyses the reaction guanosine(37) in tRNA + S-adenosyl-L-methionine = N(1)-methylguanosine(37) in tRNA + S-adenosyl-L-homocysteine + H(+). Functionally, specifically methylates guanosine-37 in various tRNAs. The protein is tRNA (guanine-N(1)-)-methyltransferase of Yersinia pseudotuberculosis serotype O:1b (strain IP 31758).